The primary structure comprises 260 residues: Thiazole synthase (260 aa).

The active-site Schiff-base intermediate with DXP is Lys96. Residues Gly157, 184-185 (AG), and 206-207 (NT) contribute to the 1-deoxy-D-xylulose 5-phosphate site.

Belongs to the ThiG family. As to quaternary structure, homotetramer. Forms heterodimers with either ThiH or ThiS.

The protein resides in the cytoplasm. The enzyme catalyses [ThiS sulfur-carrier protein]-C-terminal-Gly-aminoethanethioate + 2-iminoacetate + 1-deoxy-D-xylulose 5-phosphate = [ThiS sulfur-carrier protein]-C-terminal Gly-Gly + 2-[(2R,5Z)-2-carboxy-4-methylthiazol-5(2H)-ylidene]ethyl phosphate + 2 H2O + H(+). It participates in cofactor biosynthesis; thiamine diphosphate biosynthesis. In terms of biological role, catalyzes the rearrangement of 1-deoxy-D-xylulose 5-phosphate (DXP) to produce the thiazole phosphate moiety of thiamine. Sulfur is provided by the thiocarboxylate moiety of the carrier protein ThiS. In vitro, sulfur can be provided by H(2)S. In Rhodopseudomonas palustris (strain BisA53), this protein is Thiazole synthase.